Consider the following 535-residue polypeptide: Glutamate--cysteine ligase (535 aa).

Belongs to the glutamate--cysteine ligase type 1 family. Type 1 subfamily.

It catalyses the reaction L-cysteine + L-glutamate + ATP = gamma-L-glutamyl-L-cysteine + ADP + phosphate + H(+). Its pathway is sulfur metabolism; glutathione biosynthesis; glutathione from L-cysteine and L-glutamate: step 1/2. This is Glutamate--cysteine ligase from Pseudomonas syringae pv. syringae (strain B728a).